The primary structure comprises 101 residues: Gamma-secretase subunit PEN-2 (101 aa).

Over 1–17 (MNLERVSNEEKLNLCRK) the chain is Cytoplasmic. Positions 18-36 (YYLGGFAFLPFLWLVNIFW) form an intramembrane region, helical. The Cytoplasmic portion of the chain corresponds to 37–57 (FFKEAFFAPAYTEQSQIKGYV). Residues 58-78 (WRSAVGFLFWVIVLTTWITIF) traverse the membrane as a helical segment. Over 79 to 101 (QIYRPRWGALGDYLSFTIPLGTP) the chain is Lumenal.

Belongs to the PEN-2 family. In terms of assembly, the functional gamma-secretase complex is composed of at least four polypeptides: a presenilin homodimer (PSEN1 or PSEN2), nicastrin (NCSTN), APH1 (APH1A or APH1B) and PSENEN.

It is found in the endoplasmic reticulum membrane. Its subcellular location is the golgi apparatus. It localises to the golgi stack membrane. The protein resides in the cell membrane. The protein localises to the membrane. Functionally, essential subunit of the gamma-secretase complex, an endoprotease complex that catalyzes the intramembrane cleavage of integral membrane proteins such as Notch receptors and APP (amyloid-beta precursor protein). The gamma-secretase complex plays a role in Notch and Wnt signaling cascades and regulation of downstream processes via its role in processing key regulatory proteins, and by regulating cytosolic CTNNB1 levels. PSENEN modulates both endoproteolysis of presenilin and gamma-secretase activity. This chain is Gamma-secretase subunit PEN-2 (Psenen), found in Rattus norvegicus (Rat).